The following is a 470-amino-acid chain: AAA-ATPase At5g17730 (470 aa).

Residues 1-18 form the signal peptide; it reads MFSLRNLPSLAPFVSAYA. 252 to 259 provides a ligand contact to ATP; the sequence is GPPGTGKT.

It belongs to the AAA ATPase family. BCS1 subfamily. The cofactor is Mg(2+).

It catalyses the reaction ATP + H2O = ADP + phosphate + H(+). This Arabidopsis thaliana (Mouse-ear cress) protein is AAA-ATPase At5g17730.